Consider the following 829-residue polypeptide: Probable beta-glucosidase H (829 aa).

N-linked (GlcNAc...) asparagine glycosylation is present at asparagine 13. Residue aspartate 225 is part of the active site. N-linked (GlcNAc...) asparagine glycosylation is found at asparagine 304, asparagine 473, asparagine 602, asparagine 627, and asparagine 664. The region spanning 389–548 is the PA14 domain; the sequence is RMLSNAVIHF…DPEQMVANAV (160 aa).

It belongs to the glycosyl hydrolase 3 family.

Its subcellular location is the secreted. It catalyses the reaction Hydrolysis of terminal, non-reducing beta-D-glucosyl residues with release of beta-D-glucose.. It participates in glycan metabolism; cellulose degradation. Beta-glucosidases are one of a number of cellulolytic enzymes involved in the degradation of cellulosic biomass. Catalyzes the last step releasing glucose from the inhibitory cellobiose. This Aspergillus fumigatus (strain ATCC MYA-4609 / CBS 101355 / FGSC A1100 / Af293) (Neosartorya fumigata) protein is Probable beta-glucosidase H (bglH).